Consider the following 383-residue polypeptide: Sulfate adenylyltransferase (383 aa).

Belongs to the sulfate adenylyltransferase family.

The enzyme catalyses sulfate + ATP + H(+) = adenosine 5'-phosphosulfate + diphosphate. The protein operates within sulfur metabolism; hydrogen sulfide biosynthesis; sulfite from sulfate: step 1/3. This is Sulfate adenylyltransferase (sat) from Aeropyrum pernix (strain ATCC 700893 / DSM 11879 / JCM 9820 / NBRC 100138 / K1).